Here is a 217-residue protein sequence, read N- to C-terminus: Zinc finger CCHC-type and RNA-binding motif-containing protein 1 (217 aa).

The region spanning 10–88 (STVYVSNLPF…RVIKASIAID (79 aa)) is the RRM domain. A CCHC-type zinc finger spans residues 105–122 (SKCYECGESGHLSYACPK). The disordered stretch occupies residues 120-217 (CPKNMLGERE…YFSDEEELSD (98 aa)). Over residues 145–163 (PEEEIEEVEVSEEEGEDPA) the composition is skewed to acidic residues. Residues Ser155, Ser210, and Ser216 each carry the phosphoserine modification.

Component of the U11/U12 snRNPs that are part of the U12-type spliceosome. Interacts with ZRSR1. As to expression, expressed at higher level in heart and testis, and at lower level in cerebellum. Weakly expressed at low level in liver.

Its subcellular location is the nucleus. The protein resides in the nucleoplasm. The polypeptide is Zinc finger CCHC-type and RNA-binding motif-containing protein 1 (Zcrb1) (Mus musculus (Mouse)).